Consider the following 573-residue polypeptide: Septation ring formation regulator EzrA (573 aa).

Topologically, residues 1-2 (MQ) are extracellular. Residues 3-21 (VAIGIVVVAIVIYAAVKGF) form a helical membrane-spanning segment. The Cytoplasmic segment spans residues 22–573 (QFYIDKQVRQ…KQADKMNDEA (552 aa)). Coiled coils occupy residues 100–188 (DAQQ…LAKA), 317–364 (LTHA…VYQA), and 416–488 (ETLQ…TLKE).

This sequence belongs to the EzrA family.

Its subcellular location is the cell membrane. Its function is as follows. Negative regulator of FtsZ ring formation; modulates the frequency and position of FtsZ ring formation. Inhibits FtsZ ring formation at polar sites. Interacts either with FtsZ or with one of its binding partners to promote depolymerization. The polypeptide is Septation ring formation regulator EzrA (Lactiplantibacillus plantarum (strain ATCC BAA-793 / NCIMB 8826 / WCFS1) (Lactobacillus plantarum)).